The chain runs to 82 residues: MSCCGGNCGCGSGCQCGSGCGGCKMYPEMAEEVTTTQTVIMGVAPSKGHAEGLEAGAAAGAGAENGCKCGDNCTCNPCNCGK.

Belongs to the metallothionein superfamily. Type 15 family. Expressed in stems, leaves, rachis, inflorescences and seeds.

Its function is as follows. Metallothioneins have a high content of cysteine residues that bind various heavy metals. In Oryza sativa subsp. japonica (Rice), this protein is Metallothionein-like protein 2A (MT2A).